The following is a 222-amino-acid chain: Large ribosomal subunit protein mL64 (222 aa).

Disordered regions lie at residues 19–46 and 188–222; these read APGS…EDLL and KRLK…APSS. A compositionally biased stretch (basic residues) spans 25-36; sequence YRARPPPRRRPG. Residues 99–212 adopt a coiled-coil conformation; that stretch reads MQESLRVKQL…AAALAAAVAQ (114 aa). Positions 184–200 match the Nuclear localization signal motif; the sequence is KKERKRLKEEKQKRKKE. Positions 203 to 212 are enriched in low complexity; that stretch reads AAALAAAVAQ.

The protein belongs to the mitochondrion-specific ribosomal protein mL64 family. As to quaternary structure, component of the mitochondrial large ribosomal subunit (mt-LSU). Mature mammalian 55S mitochondrial ribosomes consist of a small (28S) and a large (39S) subunit. The 28S small subunit contains a 12S ribosomal RNA (12S mt-rRNA) and 30 different proteins. The 39S large subunit contains a 16S rRNA (16S mt-rRNA), a copy of mitochondrial valine transfer RNA (mt-tRNA(Val)), which plays an integral structural role, and 52 different proteins. Interacts with GADD45A, GADD45B and GADD45G. Interacts with NR4A1 via the NR4A1 AB domain. Interacts with ATAD3A and ATAD3B. (Microbial infection) Interacts with the human papilloma virus type 16 (HPV 16) minor capsid protein L2. As to expression, widely expressed. Highly expressed in the thyroid gland, heart, lymph nodes, trachea and adrenal tissues. Expressed at lower level in liver skeletal muscle, kidney, pancreas, testis, ovary and stomach. Barely detectable in adrenal adenoma and papillary thyroid cancer.

The protein resides in the mitochondrion. It localises to the nucleus. Functionally, acts as a negative regulator of G1 to S cell cycle phase progression by inhibiting cyclin-dependent kinases. Inhibitory effects are additive with GADD45 proteins but also occur in the absence of GADD45 proteins. Acts as a repressor of the orphan nuclear receptor NR4A1 by inhibiting AB domain-mediated transcriptional activity. May be involved in the hormone-mediated regulation of NR4A1 transcriptional activity. May play a role in mitochondrial protein synthesis. The polypeptide is Large ribosomal subunit protein mL64 (GADD45GIP1) (Homo sapiens (Human)).